We begin with the raw amino-acid sequence, 256 residues long: Small ribosomal subunit protein eS1 (256 aa).

Positions 1–18 are enriched in basic residues; it reads MAVGKNKRLSKGKKGIKK. The disordered stretch occupies residues 1–20; sequence MAVGKNKRLSKGKKGIKKRT. Position 2 is an N-acetylalanine; partial (Ala2).

It belongs to the eukaryotic ribosomal protein eS1 family. In terms of assembly, component of the small ribosomal subunit. Mature ribosomes consist of a small (40S) and a large (60S) subunit. The 40S subunit contains about 33 different proteins and 1 molecule of RNA (18S). The 60S subunit contains about 49 different proteins and 3 molecules of RNA (25S, 5.8S and 5S).

Its subcellular location is the cytoplasm. The polypeptide is Small ribosomal subunit protein eS1 (rps1) (Emericella nidulans (strain FGSC A4 / ATCC 38163 / CBS 112.46 / NRRL 194 / M139) (Aspergillus nidulans)).